The sequence spans 293 residues: Eukaryotic translation initiation factor 3 subunit F (293 aa).

Ala-2 bears the N-acetylalanine mark. The MPN domain maps to 28 to 159; sequence ARIHPLVIFN…IKAFVSSNLS (132 aa).

It belongs to the eIF-3 subunit F family. In terms of assembly, component of the eukaryotic translation initiation factor 3 (eIF-3) complex. Binds to TIF3E1 and TIF3H1. As to expression, expressed in inflorescences, leaves, stems, siliques, roots and seedlings. Accumulates at highly levels in pollen grains, developing embryos and root tips.

The protein localises to the cytoplasm. Its function is as follows. Component of the eukaryotic translation initiation factor 3 (eIF-3) complex, which is involved in protein synthesis of a specialized repertoire of mRNAs and, together with other initiation factors, stimulates binding of mRNA and methionyl-tRNAi to the 40S ribosome. The eIF-3 complex specifically targets and initiates translation of a subset of mRNAs involved in cell proliferation (Potential). Involved in cell growth and differentiation, especially during embryogenesis and male gametophyte germination. Regulates sensitivity to sugars (e.g. sucrose). In Arabidopsis thaliana (Mouse-ear cress), this protein is Eukaryotic translation initiation factor 3 subunit F (TIF3F1).